The chain runs to 508 residues: Maturase K (508 aa).

This sequence belongs to the intron maturase 2 family. MatK subfamily.

The protein resides in the plastid. Its subcellular location is the chloroplast. In terms of biological role, usually encoded in the trnK tRNA gene intron. Probably assists in splicing its own and other chloroplast group II introns. The protein is Maturase K of Amburana cearensis (Cerejeira).